The sequence spans 1072 residues: MDAASGILPDYAELFCRSNFSFLHGASSAEELVERAAKQGYRGIAITDECSLAGAPRMHVAAKAVGLPLVVGAYFGVTPDDAAPGHDPGPGAFGLVLLAQNREGYGNLSELISWRRMNAPKGTYRLTPRMLAAPPRALAHLRGVPDCFAILVPTYPARADVLDAQLAWFDALFGERARLGLVQLQRALDGAHREQVRAAGERRGMHIVALGDVTMHIRSCKPLQDTMTAIRLGMPIAECGHALAPNGEQHLRTRQRIAQLFPADALAQTCRMLDACHFSLDDLRYEYPHEIVPAGHTPTSYLAQETWAGARRRYPDGVPDTVRQRIEFELALIADLKYEPYFLTVYDIVKYARSKDILCQGRGSAANSVVCYCLGVTEVNPQQSTLLFERFLSRERGEPPDIDVDFEHQRREEVIQYLYEKYGHDRAALAAAVSTYRPRGALRETGKALGVDPMLVERVAKEHRWFDGSRDLLARFASVGLDPEVPLIRTWAEIAARLLNFPRHLSQHSGGFVVSRGKLTRLVPVENAAMEGRRVIQWDKDDLEALGLMKVDVLALGMLSALHRAFDMITAWRGPPLPDGRPFRLEHIPQDDEATYDMICRADTVGVFQIESRAQMSMLPRLRPRGYYDLVVQVSIVRPGPIQGGAVHPYLERRRIAAGEAHGEITYPSEALERVLERTLGIPIFQEQVMQIAIVAAGFTPGEADALRRAMAAWKRKGDLGKYHERIVAGMLERGYSREFAEQIFEQIKGFGEYGFPESHAASFAKLAYASSWLKRHEPAIFLAALLNSQPMGFYPPAQLVQDAKRHGVTVLPIDATKSGWEASLEAQPGAAPPDGRPAVRLGLSLVRGLGEEAARRIGAARAAGPFASVDELARRACLERRDLEALAAANAFATLAGNRRDALWQAVAAAPERGLLAAAPIDEAVRPALGAPTEADDVFADYRTIGLTLNRHPVALLRPALDARRLSSAAALRDRRNGRLARACGLVTARQMPGTAKGVLFVTLEDETGCVNVIVRPELLERQRRETLDSQLLAVSGVWQCESDVRHLVAQYLEDLTPLIAGLRTESREFH.

This sequence belongs to the DNA polymerase type-C family. DnaE2 subfamily.

It localises to the cytoplasm. It carries out the reaction DNA(n) + a 2'-deoxyribonucleoside 5'-triphosphate = DNA(n+1) + diphosphate. In terms of biological role, DNA polymerase involved in damage-induced mutagenesis and translesion synthesis (TLS). It is not the major replicative DNA polymerase. This chain is Error-prone DNA polymerase, found in Burkholderia pseudomallei (strain K96243).